The following is a 1401-amino-acid chain: DNA-directed RNA polymerase subunit beta' (1401 aa).

The Zn(2+) site is built by Cys70, Cys72, Cys85, and Cys88. Mg(2+)-binding residues include Asp460, Asp462, and Asp464. Residues Cys808, Cys882, Cys889, and Cys892 each coordinate Zn(2+).

The protein belongs to the RNA polymerase beta' chain family. In terms of assembly, the RNAP catalytic core consists of 2 alpha, 1 beta, 1 beta' and 1 omega subunit. When a sigma factor is associated with the core the holoenzyme is formed, which can initiate transcription. It depends on Mg(2+) as a cofactor. Zn(2+) is required as a cofactor.

It catalyses the reaction RNA(n) + a ribonucleoside 5'-triphosphate = RNA(n+1) + diphosphate. In terms of biological role, DNA-dependent RNA polymerase catalyzes the transcription of DNA into RNA using the four ribonucleoside triphosphates as substrates. This chain is DNA-directed RNA polymerase subunit beta', found in Legionella pneumophila (strain Corby).